The chain runs to 323 residues: Methionyl-tRNA formyltransferase (323 aa).

S115–P118 is a binding site for (6S)-5,6,7,8-tetrahydrofolate.

Belongs to the Fmt family.

The catalysed reaction is L-methionyl-tRNA(fMet) + (6R)-10-formyltetrahydrofolate = N-formyl-L-methionyl-tRNA(fMet) + (6S)-5,6,7,8-tetrahydrofolate + H(+). Functionally, attaches a formyl group to the free amino group of methionyl-tRNA(fMet). The formyl group appears to play a dual role in the initiator identity of N-formylmethionyl-tRNA by promoting its recognition by IF2 and preventing the misappropriation of this tRNA by the elongation apparatus. The polypeptide is Methionyl-tRNA formyltransferase (Lactococcus lactis subsp. cremoris (strain MG1363)).